We begin with the raw amino-acid sequence, 443 residues long: Chromosome partition protein MukF (443 aa).

The leucine-zipper stretch occupies residues 209–237 (LDETSGNLRELQDTLNAAGDKLQAQLLRI).

It belongs to the MukF family. In terms of assembly, interacts, and probably forms a ternary complex, with MukE and MukB via its C-terminal region. The complex formation is stimulated by calcium or magnesium. It is required for an interaction between MukE and MukB.

The protein resides in the cytoplasm. It localises to the nucleoid. Functionally, involved in chromosome condensation, segregation and cell cycle progression. May participate in facilitating chromosome segregation by condensation DNA from both sides of a centrally located replisome during cell division. Not required for mini-F plasmid partitioning. Probably acts via its interaction with MukB and MukE. Overexpression results in anucleate cells. It has a calcium binding activity. This Actinobacillus pleuropneumoniae serotype 3 (strain JL03) protein is Chromosome partition protein MukF.